The primary structure comprises 210 residues: Putative RING-H2 finger protein ATL50 (210 aa).

A helical membrane pass occupies residues 35 to 55; it reads IVLLYITLLSIIFFVAALIHL. An RING-type; atypical zinc finger spans residues 122 to 164; it reads CAVCLREFTAEDELRLLPKCSHAFHVECIDTWLLTNSTCPLCR. The tract at residues 187-210 is disordered; it reads SDGDNSQDSDSSFMLTDLDDVESK.

The protein belongs to the RING-type zinc finger family. ATL subfamily.

The protein localises to the membrane. It catalyses the reaction S-ubiquitinyl-[E2 ubiquitin-conjugating enzyme]-L-cysteine + [acceptor protein]-L-lysine = [E2 ubiquitin-conjugating enzyme]-L-cysteine + N(6)-ubiquitinyl-[acceptor protein]-L-lysine.. The protein operates within protein modification; protein ubiquitination. The protein is Putative RING-H2 finger protein ATL50 (ATL50) of Arabidopsis thaliana (Mouse-ear cress).